The chain runs to 174 residues: 3-hydroxydecanoyl-[acyl-carrier-protein] dehydratase (174 aa).

The active site involves histidine 73.

The protein belongs to the thioester dehydratase family. FabA subfamily. Homodimer.

It is found in the cytoplasm. The catalysed reaction is a (3R)-hydroxyacyl-[ACP] = a (2E)-enoyl-[ACP] + H2O. It catalyses the reaction (3R)-hydroxydecanoyl-[ACP] = (2E)-decenoyl-[ACP] + H2O. The enzyme catalyses (2E)-decenoyl-[ACP] = (3Z)-decenoyl-[ACP]. It functions in the pathway lipid metabolism; fatty acid biosynthesis. In terms of biological role, necessary for the introduction of cis unsaturation into fatty acids. Catalyzes the dehydration of (3R)-3-hydroxydecanoyl-ACP to E-(2)-decenoyl-ACP and then its isomerization to Z-(3)-decenoyl-ACP. Can catalyze the dehydratase reaction for beta-hydroxyacyl-ACPs with saturated chain lengths up to 16:0, being most active on intermediate chain length. The protein is 3-hydroxydecanoyl-[acyl-carrier-protein] dehydratase of Cellvibrio japonicus (strain Ueda107) (Pseudomonas fluorescens subsp. cellulosa).